The primary structure comprises 156 residues: Cytochrome c-type biogenesis protein CcmE 1 (156 aa).

Residues Met1–Arg8 lie on the Cytoplasmic side of the membrane. A helical; Signal-anchor for type II membrane protein membrane pass occupies residues Leu9 to Ala29. Topologically, residues Leu30–Arg156 are periplasmic. Residues His123 and Tyr127 each coordinate heme.

Belongs to the CcmE/CycJ family.

It localises to the cell inner membrane. In terms of biological role, heme chaperone required for the biogenesis of c-type cytochromes. Transiently binds heme delivered by CcmC and transfers the heme to apo-cytochromes in a process facilitated by CcmF and CcmH. The polypeptide is Cytochrome c-type biogenesis protein CcmE 1 (Xanthomonas axonopodis pv. citri (strain 306)).